Consider the following 157-residue polypeptide: Snaclec EMS16 subunit alpha (157 aa).

The N-terminal stretch at 1–23 (MGRFISVSFGLLVVFLSLSGTGA) is a signal peptide. 3 disulfides stabilise this stretch: Cys-27-Cys-38, Cys-55-Cys-152, and Cys-127-Cys-144. The C-type lectin domain maps to 34–153 (YDQHCYLAIG…CEDLYPFVCK (120 aa)).

This sequence belongs to the snaclec family. Heterodimer of subunits A and B; disulfide-linked. In terms of tissue distribution, expressed by the venom gland.

The protein localises to the secreted. Functionally, EMS16 is a potent and selective inhibitor of alpha-2/beta-1 (ITGA2/ITGB1) integrin and acts as a potent antagonist of platelet aggregation and cell migration. Binds specifically to the I domain of the alpha-2 subunit, in a metal ion-independent fashion. This chain is Snaclec EMS16 subunit alpha, found in Echis multisquamatus (Central Asian sand viper).